The sequence spans 450 residues: UDP-N-acetylmuramoylalanine--D-glutamate ligase (450 aa).

ATP is bound at residue 119–125 (GSNGKTT).

Belongs to the MurCDEF family.

It is found in the cytoplasm. It carries out the reaction UDP-N-acetyl-alpha-D-muramoyl-L-alanine + D-glutamate + ATP = UDP-N-acetyl-alpha-D-muramoyl-L-alanyl-D-glutamate + ADP + phosphate + H(+). It participates in cell wall biogenesis; peptidoglycan biosynthesis. Cell wall formation. Catalyzes the addition of glutamate to the nucleotide precursor UDP-N-acetylmuramoyl-L-alanine (UMA). This is UDP-N-acetylmuramoylalanine--D-glutamate ligase from Bacillus anthracis (strain A0248).